Reading from the N-terminus, the 191-residue chain is Somatotropin (191 aa).

Residue His20 participates in Zn(2+) binding. Cys53 and Cys164 are oxidised to a cystine. Position 173 (Glu173) interacts with Zn(2+). Cysteines 181 and 189 form a disulfide.

The protein belongs to the somatotropin/prolactin family.

The protein localises to the secreted. In terms of biological role, growth hormone plays an important role in growth control and is involved in the regulation of several anabolic processes. Implicated as an osmoregulatory substance important for seawater adaptation. In Chelonia mydas (Green sea-turtle), this protein is Somatotropin (GH).